We begin with the raw amino-acid sequence, 115 residues long: NADH-ubiquinone oxidoreductase chain 3 (115 aa).

3 helical membrane-spanning segments follow: residues 3 to 23, 55 to 75, and 84 to 104; these read FVLI…ITFW, FFLV…LLPL, and LPLM…SLAY.

This sequence belongs to the complex I subunit 3 family. In terms of assembly, core subunit of respiratory chain NADH dehydrogenase (Complex I) which is composed of 45 different subunits. Interacts with TMEM186. Interacts with TMEM242.

It localises to the mitochondrion inner membrane. It catalyses the reaction a ubiquinone + NADH + 5 H(+)(in) = a ubiquinol + NAD(+) + 4 H(+)(out). Its function is as follows. Core subunit of the mitochondrial membrane respiratory chain NADH dehydrogenase (Complex I) which catalyzes electron transfer from NADH through the respiratory chain, using ubiquinone as an electron acceptor. Essential for the catalytic activity of complex I. This chain is NADH-ubiquinone oxidoreductase chain 3, found in Pan troglodytes (Chimpanzee).